We begin with the raw amino-acid sequence, 437 residues long: Phosphoribosylamine--glycine ligase (437 aa).

The 213-residue stretch at 110-322 (KNLLRSADIP…LVEVMQAVVD (213 aa)) folds into the ATP-grasp domain. 142–203 (EPTDPVNVVV…EERLTGPEVS (62 aa)) is an ATP binding site. Residues E292 and N294 each coordinate Mg(2+).

Belongs to the GARS family. Requires Mg(2+) as cofactor. The cofactor is Mn(2+).

The catalysed reaction is 5-phospho-beta-D-ribosylamine + glycine + ATP = N(1)-(5-phospho-beta-D-ribosyl)glycinamide + ADP + phosphate + H(+). The protein operates within purine metabolism; IMP biosynthesis via de novo pathway; N(1)-(5-phospho-D-ribosyl)glycinamide from 5-phospho-alpha-D-ribose 1-diphosphate: step 2/2. This Rhodopirellula baltica (strain DSM 10527 / NCIMB 13988 / SH1) protein is Phosphoribosylamine--glycine ligase.